The following is a 548-amino-acid chain: Probable 5-epi-aristolochene synthase 4 (548 aa).

The Mg(2+) site is built by Asp-301, Asp-305, Asp-444, Thr-448, and Glu-452. The short motif at 301 to 305 (DDTFD) is the DDXXD motif element.

This sequence belongs to the terpene synthase family. As to quaternary structure, monomer. Mg(2+) serves as cofactor.

The protein localises to the cytoplasm. The catalysed reaction is (2E,6E)-farnesyl diphosphate = (+)-5-epi-aristolochene + diphosphate. It participates in secondary metabolite biosynthesis; terpenoid biosynthesis. Functionally, catalyzes the cyclization of trans,trans-farnesyl diphosphate (FPP) to the bicyclic intermediate 5-epi-aristolochene, initial step in the conversion of FPP to the sesquiterpenoid antifungal phytoalexin capsidiol. Produces germacrene A as an enzyme-bound intermediate that is not released by the enzyme, but is further cyclized to produce the bicyclic 5-epi-aristolochene. This is Probable 5-epi-aristolochene synthase 4 from Nicotiana attenuata (Coyote tobacco).